The primary structure comprises 126 residues: UPF0538 protein C2orf76 homolog (126 aa).

Belongs to the UPF0538 family.

This Bos taurus (Bovine) protein is UPF0538 protein C2orf76 homolog.